Consider the following 375-residue polypeptide: Biotin synthase, mitochondrial (375 aa).

A mitochondrion-targeting transit peptide spans 1–16 (MMSTIYRHLSTARPAL). A Radical SAM core domain is found at 81 to 310 (HDPTKVQLCT…IATARIVMPK (230 aa)). Residues Cys99, Cys103, and Cys106 each contribute to the [4Fe-4S] cluster site. Cys143, Cys176, Cys236, and Arg314 together coordinate [2Fe-2S] cluster.

Belongs to the radical SAM superfamily. Biotin synthase family. Requires [4Fe-4S] cluster as cofactor. [2Fe-2S] cluster serves as cofactor.

Its subcellular location is the mitochondrion. It catalyses the reaction (4R,5S)-dethiobiotin + (sulfur carrier)-SH + 2 reduced [2Fe-2S]-[ferredoxin] + 2 S-adenosyl-L-methionine = (sulfur carrier)-H + biotin + 2 5'-deoxyadenosine + 2 L-methionine + 2 oxidized [2Fe-2S]-[ferredoxin]. Its pathway is cofactor biosynthesis; biotin biosynthesis; biotin from 7,8-diaminononanoate: step 2/2. This chain is Biotin synthase, mitochondrial (BIO2), found in Saccharomyces cerevisiae (strain ATCC 204508 / S288c) (Baker's yeast).